The following is a 145-amino-acid chain: Alpha-amylase/trypsin inhibitor CM1 (145 aa).

Residues 1–25 form the signal peptide; it reads MASKSSISPLLLATVLVSVFAAATA.

Belongs to the protease inhibitor I6 (cereal trypsin/alpha-amylase inhibitor) family. In terms of assembly, subunit of the tetrameric inhibitor. Endosperm.

It localises to the secreted. Its function is as follows. Alpha-amylase/trypsin inhibitor. It could be involved in insect defense mechanisms. The protein is Alpha-amylase/trypsin inhibitor CM1 of Triticum aestivum (Wheat).